An 841-amino-acid chain; its full sequence is Envelope glycoprotein H (841 aa).

A signal peptide spans 1–17; that stretch reads MFALVLAVVILPLWTTA. 3 N-linked (GlcNAc...) asparagine; by host glycosylation sites follow: N18, N45, and N217. Over 18-802 the chain is Virion surface; the sequence is NKSYVTPTPA…ERRQAIRMSG (785 aa). The segment at 246–309 is interaction with gL; it reads DSGRVEVNIG…DPGPSYRVYL (64 aa). N317, N499, N522, N760, and N783 each carry an N-linked (GlcNAc...) asparagine; by host glycan. Residues 803–823 form a helical membrane-spanning segment; it reads QYLGASLGGAFLAVVGFGIIG. The Intravirion segment spans residues 824-841; the sequence is WMLCGNSRLREYNKIPLT.

The protein belongs to the herpesviridae glycoprotein H family. Interacts with glycoprotein L (gL); this interaction is necessary for the correct processing and cell surface expression of gH. The heterodimer gH/gL seems to interact with gB trimers during fusion. Post-translationally, N-glycosylated, O-glycosylated, and sialylated.

It localises to the virion membrane. The protein resides in the host cell membrane. The protein localises to the host endosome membrane. The heterodimer glycoprotein H-glycoprotein L is required for the fusion of viral and plasma membranes leading to virus entry into the host cell. Following initial binding to host receptor, membrane fusion is mediated by the fusion machinery composed of gB and the heterodimer gH/gL. May also be involved in the fusion between the virion envelope and the outer nuclear membrane during virion morphogenesis. In Varicella-zoster virus (strain Oka vaccine) (HHV-3), this protein is Envelope glycoprotein H.